The sequence spans 367 residues: MRLLPLFLMVTLAASGCGIVESKKIDYKSSNKLPTLEIPPDLVAPTADNRYAIPDTEGSGTATLSTYSAERKAAPSGTPSLLPAQDKARIERAGTQRWLVVQATPQQVWPVIKDFWQENGFIVNLESPETGVIETDWAENRAKIPQDVIRRTLGKVLDGLYSTAERDKFRTRIEAGSGGTEIYLSHRGMMEVYATEGKDKTVWQPRPADPELEAEMLRRLMLRFGVEENRAQTLLTAKQTPDQARVIRDAGGSLLEMDEGFDRAWRRVGLALDRVGFAVEDRDRSKGTYFVRYIDPDADNASKRDEGMFAKLAFWRSKKDQASPQLQIVVDEAGEGKSRVRVAGGEGRAADAATQNRIINLLHKELK.

An N-terminal signal peptide occupies residues 1–16 (MRLLPLFLMVTLAASG). Cysteine 17 is lipidated: N-palmitoyl cysteine. Cysteine 17 carries S-diacylglycerol cysteine lipidation.

It belongs to the BamC family. Part of the Bam complex.

It localises to the cell outer membrane. Part of the outer membrane protein assembly complex, which is involved in assembly and insertion of beta-barrel proteins into the outer membrane. The polypeptide is Outer membrane protein assembly factor BamC (Thiobacillus denitrificans (strain ATCC 25259 / T1)).